The sequence spans 215 residues: uncharacterized protein (215 aa).

The S-adenosyl-L-methionine site is built by glycine 53, glutamate 74, and aspartate 97.

The protein belongs to the methyltransferase superfamily. YrrT family.

In terms of biological role, could be a S-adenosyl-L-methionine-dependent methyltransferase. This is an uncharacterized protein from Geobacillus kaustophilus (strain HTA426).